We begin with the raw amino-acid sequence, 331 residues long: Uroporphyrinogen decarboxylase (331 aa).

Residues 22 to 26 (RQAGR), aspartate 71, tyrosine 145, serine 199, and histidine 308 each bind substrate.

The protein belongs to the uroporphyrinogen decarboxylase family. In terms of assembly, homodimer.

Its subcellular location is the cytoplasm. It catalyses the reaction uroporphyrinogen III + 4 H(+) = coproporphyrinogen III + 4 CO2. The protein operates within porphyrin-containing compound metabolism; protoporphyrin-IX biosynthesis; coproporphyrinogen-III from 5-aminolevulinate: step 4/4. In terms of biological role, catalyzes the decarboxylation of four acetate groups of uroporphyrinogen-III to yield coproporphyrinogen-III. This Picrophilus torridus (strain ATCC 700027 / DSM 9790 / JCM 10055 / NBRC 100828 / KAW 2/3) protein is Uroporphyrinogen decarboxylase.